The primary structure comprises 530 residues: uncharacterized protein (530 aa).

Belongs to the mimivirus R640 family.

This is an uncharacterized protein from Acanthamoeba polyphaga (Amoeba).